The primary structure comprises 211 residues: tRNA (guanine-N(7)-)-methyltransferase (211 aa).

4 residues coordinate S-adenosyl-L-methionine: Glu43, Glu68, Asn95, and Asp117. The active site involves Asp117. Residues Lys121, Asp153, and 190–193 (TEYE) each bind substrate.

This sequence belongs to the class I-like SAM-binding methyltransferase superfamily. TrmB family.

The catalysed reaction is guanosine(46) in tRNA + S-adenosyl-L-methionine = N(7)-methylguanosine(46) in tRNA + S-adenosyl-L-homocysteine. It participates in tRNA modification; N(7)-methylguanine-tRNA biosynthesis. In terms of biological role, catalyzes the formation of N(7)-methylguanine at position 46 (m7G46) in tRNA. The polypeptide is tRNA (guanine-N(7)-)-methyltransferase (Alkaliphilus oremlandii (strain OhILAs) (Clostridium oremlandii (strain OhILAs))).